Here is a 135-residue protein sequence, read N- to C-terminus: Protein Wnt-7a (135 aa).

Cystine bridges form between C3-C17 and C5-C12. The O-palmitoleoyl serine; by PORCN moiety is linked to residue S9. Residues 41–69 (VEPVRASRNKRPTFLKIKKPLSYRKPMDT) are disordered linker. Cystine bridges form between C81-C112, C97-C107, C111-C134, and C130-C131. A glycan (N-linked (GlcNAc...) asparagine) is linked at N98.

It belongs to the Wnt family. In terms of processing, palmitoleoylation is required for efficient binding to frizzled receptors. Depalmitoleoylation leads to Wnt signaling pathway inhibition. In embryo, in brain and ventral neural tube; in adults, in brain.

It is found in the secreted. Its subcellular location is the extracellular space. The protein resides in the extracellular matrix. In terms of biological role, ligand for members of the frizzled family of seven transmembrane receptors that functions in the canonical Wnt/beta-catenin signaling pathway. Plays an important role in embryonic development, including dorsal versus ventral patterning during limb development, skeleton development and urogenital tract development. Required for central nervous system (CNS) angiogenesis and blood-brain barrier regulation. The protein is Protein Wnt-7a (wnt7a) of Xenopus laevis (African clawed frog).